An 800-amino-acid polypeptide reads, in one-letter code: Integrin beta-5 (800 aa).

An N-terminal signal peptide occupies residues 1-24 (MPRAPALLFSCLLGLCALVPRLPG). Residues 25 to 722 (LNICTSGSAT…PECGTAPSAM (698 aa)) lie on the Extracellular side of the membrane. The 50-residue stretch at 27–76 (ICTSGSATSCEECLLIHPKCAWCFKEDFGSLRSVTSRCDLKANLIRNGCG) folds into the PSI domain. 19 cysteine pairs are disulfide-bonded: Cys28–Cys46, Cys36–Cys463, Cys39–Cys64, Cys49–Cys75, Cys202–Cys211, Cys259–Cys300, Cys401–Cys413, Cys433–Cys461, Cys465–Cys484, Cys476–Cys487, Cys489–Cys498, Cys500–Cys530, Cys513–Cys528, Cys522–Cys533, Cys535–Cys548, Cys550–Cys571, Cys555–Cys569, Cys563–Cys574, and Cys576–Cys585. A VWFA domain is found at 136 to 378 (YPVDLYYLMD…QLIINAYNSI (243 aa)). Mg(2+)-binding residues include Ser147 and Ser149. The Ca(2+) site is built by Ser149, Asp152, Asp153, and Asp184. 4 residues coordinate Ca(2+): Asn242, Asp244, Pro246, and Glu247. Position 247 (Glu247) interacts with Mg(2+). Residue Asn347 is glycosylated (N-linked (GlcNAc...) asparagine). Position 362 (Gly362) interacts with Ca(2+). I-EGF domains are found at residues 465–499 (CSAGLEPDSARCSSNGTYVCGLCECNPGYLGTRCE), 500–549 (CQEG…SFCE), 550–586 (CDNFSCARNKGVLCSGHGECHCGECKCHAGYIGDNCN), and 587–626 (CSTDISTCQARDGHICSDRGHCVCGQCQCTEPGAFGETCE). A glycan (N-linked (GlcNAc...) asparagine) is linked at Asn479. N-linked (GlcNAc...) asparagine glycosylation is present at Asn552. The N-linked (GlcNAc...) asparagine glycan is linked to Asn586. 9 disulfides stabilise this stretch: Cys587–Cys610, Cys594–Cys608, Cys602–Cys613, Cys615–Cys625, Cys628–Cys631, Cys635–Cys683, Cys641–Cys662, Cys644–Cys658, and Cys691–Cys715. N-linked (GlcNAc...) asparagine glycosylation is found at Asn655 and Asn706. Residues 723-743 (TILLAVVGSILLTGFALLVIW) form a helical membrane-spanning segment. At 744-800 (KLLVTIHDRREFAKFQSERSRARYEMASNPLYRKPISTHTVDFTFNKFNKSYNGTVD) the chain is on the cytoplasmic side. The residue at position 771 (Ser771) is a Phosphoserine.

It belongs to the integrin beta chain family. As to quaternary structure, heterodimer of an alpha and a beta subunit. Beta-5 (ITGB5) associates with alpha-V (ITGAV). Interacts with MYO10. Interacts with DAB2. Integrin ITGAV:ITGB5 interacts with FBLN5 (via N-terminus). ITGAV:ITGB5 interacts with CCN3. Interacts with tensin TNS3; TNS3 also interacts with PEAK1, thus acting as an adapter molecule to bridge the association of PEAK1 with ITGB5.

It localises to the cell membrane. In terms of biological role, integrin alpha-V/beta-5 (ITGAV:ITGB5) is a receptor for fibronectin. It recognizes the sequence R-G-D in its ligand. The protein is Integrin beta-5 (ITGB5) of Bos taurus (Bovine).